Here is a 187-residue protein sequence, read N- to C-terminus: Adenylate kinase (187 aa).

ATP is bound at residue 11–16 (GAGKGT). An NMP region spans residues 31–60 (STGDILREAVKNQTAMGIEAKRYMDAGDLV). Residues Thr32, Arg37, 58–60 (DLV), 86–89 (GFPR), and Gln93 each bind AMP. Residues 127–137 (GRAEIEGRADD) form an LID region. Residue Arg128 participates in ATP binding. AMP is bound by residues Arg134 and Arg145. Gly173 provides a ligand contact to ATP.

This sequence belongs to the adenylate kinase family. In terms of assembly, monomer.

It localises to the cytoplasm. The enzyme catalyses AMP + ATP = 2 ADP. Its pathway is purine metabolism; AMP biosynthesis via salvage pathway; AMP from ADP: step 1/1. In terms of biological role, catalyzes the reversible transfer of the terminal phosphate group between ATP and AMP. Plays an important role in cellular energy homeostasis and in adenine nucleotide metabolism. This Leptospira interrogans serogroup Icterohaemorrhagiae serovar copenhageni (strain Fiocruz L1-130) protein is Adenylate kinase.